The following is a 325-amino-acid chain: Peroxidase 47 (325 aa).

The first 36 residues, 1-36 (MLTRFKKQNNKMVRANIVSMVLLMHAIVGFPFHARG), serve as a signal peptide directing secretion. Disulfide bonds link Cys46–Cys125, Cys79–Cys84, Cys131–Cys321, and Cys209–Cys235. His77 functions as the Proton acceptor in the catalytic mechanism. The Ca(2+) site is built by Asp78, Gly83, Asp85, and Ser87. A substrate-binding site is contributed by Pro172. N-linked (GlcNAc...) asparagine glycosylation occurs at Asn177. His202 is a binding site for heme b. Thr203 is a Ca(2+) binding site. Ca(2+) is bound by residues Asp246, Thr248, and Asp253.

This sequence belongs to the peroxidase family. Classical plant (class III) peroxidase subfamily. Requires heme b as cofactor. Ca(2+) serves as cofactor.

The protein resides in the secreted. The enzyme catalyses 2 a phenolic donor + H2O2 = 2 a phenolic radical donor + 2 H2O. Functionally, removal of H(2)O(2), oxidation of toxic reductants, biosynthesis and degradation of lignin, suberization, auxin catabolism, response to environmental stresses such as wounding, pathogen attack and oxidative stress. These functions might be dependent on each isozyme/isoform in each plant tissue. In Arabidopsis thaliana (Mouse-ear cress), this protein is Peroxidase 47 (PER47).